The chain runs to 906 residues: Probable RNA-directed DNA polymerase from transposon BS (906 aa).

A Reverse transcriptase domain is found at 482-758 (AILRVQFFPK…SQAKYLGITL (277 aa)).

Mg(2+) serves as cofactor. Requires Mn(2+) as cofactor.

It catalyses the reaction DNA(n) + a 2'-deoxyribonucleoside 5'-triphosphate = DNA(n+1) + diphosphate. This chain is Probable RNA-directed DNA polymerase from transposon BS, found in Drosophila melanogaster (Fruit fly).